Consider the following 149-residue polypeptide: Arginine repressor (149 aa).

This sequence belongs to the ArgR family.

It localises to the cytoplasm. The protein operates within amino-acid biosynthesis; L-arginine biosynthesis [regulation]. Its function is as follows. Regulates arginine biosynthesis genes. This Shouchella clausii (strain KSM-K16) (Alkalihalobacillus clausii) protein is Arginine repressor.